The primary structure comprises 320 residues: cUMP-AMP-activated phospholipase (320 aa).

The 182-residue stretch at 23 to 204 (LALDGGGAKG…CANNPTLFAI (182 aa)) folds into the PNPLA domain. A GXGXXG motif is present at residues 27 to 32 (GGGAKG). Positions 59–63 (GTSTG) match the GXSXG motif. S61 functions as the Nucleophile in the catalytic mechanism. Residue D191 is the Proton acceptor of the active site. The DGA/G motif lies at 191-193 (DGG).

This sequence belongs to the patatin family.

It catalyses the reaction a 1,2-diacyl-sn-glycero-3-phosphocholine + H2O = a 2-acyl-sn-glycero-3-phosphocholine + a fatty acid + H(+). Its activity is regulated as follows. Phospholipase activity is specifically activated upon 3',3'-cUAMP binding. Is not activated by the other cyclic dinucleotides 3',3'-cGAMP, 3',3'-c-diAMP and 3',3'-c-diGMP. Therefore, is specifically activated by only the nucleotide synthesized from its adjacently encoded nucleotidyltransferase (CdnE). In terms of biological role, effector phospholipase of a CBASS antivirus system. CBASS (cyclic oligonucleotide-based antiphage signaling system) provides immunity against bacteriophage. The CD-NTase protein synthesizes cyclic nucleotides in response to infection; these serve as specific second messenger signals. The signals activate a diverse range of effectors, leading to bacterial cell death and thus abortive phage infection. A type II-A(UA) CBASS system. Functionally, phospholipase that is activated upon binding to the cyclic dinucleotide (CDN) second messenger 3',3'-cyclic UMP-AMP (3',3'-cUAMP). The chain is cUMP-AMP-activated phospholipase from Escherichia coli.